We begin with the raw amino-acid sequence, 842 residues long: DNA topoisomerase-like protein cin-4 (842 aa).

Over residues Met1–Asn26 the composition is skewed to basic and acidic residues. The segment at Met1–Gly50 is disordered. The Topo IIA-type catalytic domain maps to Ile314 to Leu783.

This sequence belongs to the type II topoisomerase family.

Plays a role in the removal of cohesin from kinetochores on mitotic chromosomes and is required for centromere resolution. The polypeptide is DNA topoisomerase-like protein cin-4 (Caenorhabditis elegans).